The following is a 300-amino-acid chain: 4-hydroxy-tetrahydrodipicolinate synthase (300 aa).

Residue Thr57 participates in pyruvate binding. Catalysis depends on Tyr145, which acts as the Proton donor/acceptor. Lys173 functions as the Schiff-base intermediate with substrate in the catalytic mechanism. Ile213 is a binding site for pyruvate.

The protein belongs to the DapA family. Homotetramer; dimer of dimers.

It localises to the cytoplasm. The enzyme catalyses L-aspartate 4-semialdehyde + pyruvate = (2S,4S)-4-hydroxy-2,3,4,5-tetrahydrodipicolinate + H2O + H(+). Its pathway is amino-acid biosynthesis; L-lysine biosynthesis via DAP pathway; (S)-tetrahydrodipicolinate from L-aspartate: step 3/4. Its function is as follows. Catalyzes the condensation of (S)-aspartate-beta-semialdehyde [(S)-ASA] and pyruvate to 4-hydroxy-tetrahydrodipicolinate (HTPA). The polypeptide is 4-hydroxy-tetrahydrodipicolinate synthase (Corynebacterium jeikeium (strain K411)).